The chain runs to 391 residues: Nucleosome assembly protein 1-like 1 (391 aa).

A compositionally biased stretch (basic and acidic residues) spans 1-10 (MADIDNKEQS). Residues 1 to 32 (MADIDNKEQSELDQDLEDVEEVEEEETGEETK) are disordered. Ala-2 bears the N-acetylalanine mark. Ser-10 carries the post-translational modification Phosphoserine. A compositionally biased stretch (acidic residues) spans 11-28 (ELDQDLEDVEEVEEEETG). Phosphothreonine is present on residues Thr-62 and Thr-64. Ser-69 bears the Phosphoserine mark. Lys-116 carries the post-translational modification N6-acetyllysine. The short motif at 125–150 (YEPTEEECEWKPDEEDEVSEELKEKA) is the NAP1L motif element. Positions 131 to 143 (ECEWKPDEEDEVS) are enriched in acidic residues. The segment at 131–163 (ECEWKPDEEDEVSEELKEKAKIEDEKKDEEKED) is disordered. A Phosphoserine modification is found at Ser-143. Residues 144–163 (EELKEKAKIEDEKKDEEKED) are compositionally biased toward basic and acidic residues. The short motif at 273–279 (IKKKQKH) is the Nuclear localization signal element. Residues 346 to 376 (AIEDDDDDYDEEGEEADEEGEEEGDEENDPD) are compositionally biased toward acidic residues. Residues 346 to 391 (AIEDDDDDYDEEGEEADEEGEEEGDEENDPDYDPKKDQNPAECKQQ) form a disordered region. Residues Glu-359 and Glu-360 each carry the 5-glutamyl polyglycine modification. Residues 377–391 (YDPKKDQNPAECKQQ) show a composition bias toward basic and acidic residues. Cys-388 is subject to Cysteine methyl ester. Cys-388 carries S-farnesyl cysteine lipidation. The propeptide at 389 to 391 (KQQ) is removed in mature form.

The protein belongs to the nucleosome assembly protein (NAP) family. Homodimer. The dimer binds strongly and sequentially to single and double H2A-H2B heterodimers. Interacts with ERCC6; this interaction increases ERCC6 processivity. Interacts with RAD54. Interacts with SETD1A. Post-translationally, polyglycylated by TTLL10 on glutamate residues, resulting in polyglycine chains on the gamma-carboxyl group. Both polyglutamylation and polyglycylation modifications can coexist on the same protein on adjacent residues, and lowering polyglycylation levels increases polyglutamylation, and reciprocally. In terms of processing, polyglutamylated by TTLL4 on glutamate residues, resulting in polyglutamate chains on the gamma-carboxyl group. Both polyglutamylation and polyglycylation modifications can coexist on the same protein on adjacent residues, and lowering polyglycylation levels increases polyglutamylation, and reciprocally. Highly expressed in the brain (at protein level). High expression in cerebral cortex, not in cerebellar cortex.

The protein localises to the nucleus. Its subcellular location is the cytoplasm. The protein resides in the melanosome. Histone chaperone that plays a role in the nuclear import of H2A-H2B and nucleosome assembly. Also participates in several important DNA repair mechanisms: greatly enhances ERCC6-mediated chromatin remodeling which is essential for transcription-coupled nucleotide excision DNA repair. Also stimulates homologous recombination (HR) by RAD51 and RAD54 which is essential in mitotic DNA double strand break (DSB) repair. Plays a key role in the regulation of embryonic neurogenesis. Promotes the proliferation of neural progenitors and inhibits neuronal differentiation during cortical development. Regulates neurogenesis via the modulation of RASSF10; regulates RASSF10 expression by promoting SETD1A-mediated H3K4 methylation at the RASSF10 promoter. This is Nucleosome assembly protein 1-like 1 (Nap1l1) from Mus musculus (Mouse).